The chain runs to 395 residues: MKLILTVLAFLSLQVALSDDVGRLYEWSKIDIVGVRPSVYDSSNIIPTGVAYDADSKMLFFGLPRKYSKVPITVAQLSTRSYNSAERRDPPLDKFSGKSKKPLTSVYQPVIDDCRRLWVLDVGIVEVKAERKTYPTKNPALVAFDLTKPDYPEIHRYELTGDAAKTPLGYGGFAVDVVNPKKCGKNDEKTYVYIANFVENSLIVYDKKKSDAWVLKDDSFKPEGVSTYTHNGKEHELKTGIFGIALGDRNKEGNRPAYYLAGSSTKLYRLDTKLLKKKGSKLVPKLIGDRGYKTEAIALAYDPETKVLFFAETDSRQVSCWNIKKELKPENVGVIYSSAKLNFATDMMVDSKGFLWFMSNGQPPFDEKMKYEDPHIRLMKVKTKKAIKGEKRCQG.

A signal peptide spans 1–18 (MKLILTVLAFLSLQVALS).

Belongs to the major royal jelly protein family. As to expression, salivary gland (at protein level).

It localises to the secreted. Probably modulates blood feeding of sand flies on vertebrate species by binding and sequestering different mediators involved in the host response. Functions as a chemoattractant for host neutrophils; likely acts through a G-protein-coupled receptor and effect is dependent on calcium influx and phosphatidylinositol 3-kinases (PI3K) activity. In terms of biological role, (Microbial infection) Probably enhances infection caused by Leishmania species in the host through augmentation of host neutrophil recruitment into the skin. The polypeptide is Yellow-related salivary protein M35 (Phlebotomus duboscqi (Sandfly)).